Reading from the N-terminus, the 420-residue chain is Putative zinc metalloprotease Lmo1318 (420 aa).

Residue His18 coordinates Zn(2+). Glu19 is a catalytic residue. A Zn(2+)-binding site is contributed by His22. 4 consecutive transmembrane segments (helical) span residues 172–194, 304–326, 347–369, and 393–412; these read TIFA…LAFV, NWIV…LDML, VLNW…LPAL, and GIIH…LVTW. In terms of domain architecture, PDZ spans 176–267; it reads GPLFNFILAI…DGKTQDIDVK (92 aa).

Belongs to the peptidase M50B family. It depends on Zn(2+) as a cofactor.

It is found in the cell membrane. The chain is Putative zinc metalloprotease Lmo1318 from Listeria monocytogenes serovar 1/2a (strain ATCC BAA-679 / EGD-e).